Here is a 508-residue protein sequence, read N- to C-terminus: Cell division protein FtsZ (508 aa).

Residues 24–28, 111–113, Glu-142, Arg-146, and Asp-190 each bind GTP; these read GAGGN and GTG. 2 disordered regions span residues 342-389 and 428-508; these read IAET…SAPQ and VAEE…RLAN. The span at 464 to 482 shows a compositional bias: low complexity; sequence QQASAPQAQARSAQSARPQ.

The protein belongs to the FtsZ family. In terms of assembly, homodimer. Polymerizes to form a dynamic ring structure in a strictly GTP-dependent manner. Interacts directly with several other division proteins.

Its subcellular location is the cytoplasm. Its function is as follows. Essential cell division protein that forms a contractile ring structure (Z ring) at the future cell division site. The regulation of the ring assembly controls the timing and the location of cell division. One of the functions of the FtsZ ring is to recruit other cell division proteins to the septum to produce a new cell wall between the dividing cells. Binds GTP and shows GTPase activity. This is Cell division protein FtsZ from Caulobacter vibrioides (strain ATCC 19089 / CIP 103742 / CB 15) (Caulobacter crescentus).